A 301-amino-acid polypeptide reads, in one-letter code: Probable alpha-L-glutamate ligase (301 aa).

The ATP-grasp domain occupies Thr-104–Glu-287. ATP contacts are provided by residues Lys-141, Glu-178–Tyr-179, Asp-187, and Arg-211–Asn-213. Asp-248, Glu-260, and Asn-262 together coordinate Mg(2+). Positions 248, 260, and 262 each coordinate Mn(2+).

This sequence belongs to the RimK family. It depends on Mg(2+) as a cofactor. Mn(2+) is required as a cofactor.

The sequence is that of Probable alpha-L-glutamate ligase from Alkalilimnicola ehrlichii (strain ATCC BAA-1101 / DSM 17681 / MLHE-1).